A 118-amino-acid polypeptide reads, in one-letter code: NADH-ubiquinone oxidoreductase chain 3 (118 aa).

Helical transmembrane passes span 4–24 (FAPI…PLGV) and 87–107 (IDPF…IGSL).

It belongs to the complex I subunit 3 family.

It is found in the mitochondrion membrane. The catalysed reaction is a ubiquinone + NADH + 5 H(+)(in) = a ubiquinol + NAD(+) + 4 H(+)(out). In terms of biological role, core subunit of the mitochondrial membrane respiratory chain NADH dehydrogenase (Complex I) that is believed to belong to the minimal assembly required for catalysis. Complex I functions in the transfer of electrons from NADH to the respiratory chain. The immediate electron acceptor for the enzyme is believed to be ubiquinone. The sequence is that of NADH-ubiquinone oxidoreductase chain 3 (ND3) from Panax ginseng (Korean ginseng).